Here is a 278-residue protein sequence, read N- to C-terminus: HTH-type transcriptional activator RhaS (278 aa).

The region spanning 174 to 272 (NQLMAWLEDH…NWSPRDIRQG (99 aa)) is the HTH araC/xylS-type domain. 2 consecutive DNA-binding regions (H-T-H motif) follow at residues 191 to 212 (EAVA…KQHT) and 239 to 262 (VTEI…RREF).

In terms of assembly, binds DNA as a dimer.

The protein localises to the cytoplasm. Functionally, activates expression of the rhaBAD and rhaT operons. The protein is HTH-type transcriptional activator RhaS of Salmonella arizonae (strain ATCC BAA-731 / CDC346-86 / RSK2980).